We begin with the raw amino-acid sequence, 545 residues long: CTP synthase (545 aa).

Residues 1–267 (MTKFIFVTGG…AEQTLKLLQM (267 aa)) form an amidoligase domain region. Ser13 contacts CTP. Ser13 is a binding site for UTP. ATP contacts are provided by residues 14 to 19 (SIGKGI) and Asp71. Mg(2+)-binding residues include Asp71 and Glu141. Residues 148–150 (DIE), 188–193 (KTKPTQ), and Lys224 each bind CTP. UTP is bound by residues 188-193 (KTKPTQ) and Lys224. Positions 292–534 (EIAIVGKYVS…VQAAIAQSHP (243 aa)) constitute a Glutamine amidotransferase type-1 domain. L-glutamine is bound at residue Gly354. Cys381 acts as the Nucleophile; for glutamine hydrolysis in catalysis. L-glutamine contacts are provided by residues 382–385 (LGMQ), Glu405, and Arg462. Active-site residues include His507 and Glu509.

The protein belongs to the CTP synthase family. In terms of assembly, homotetramer.

The enzyme catalyses UTP + L-glutamine + ATP + H2O = CTP + L-glutamate + ADP + phosphate + 2 H(+). It carries out the reaction L-glutamine + H2O = L-glutamate + NH4(+). The catalysed reaction is UTP + NH4(+) + ATP = CTP + ADP + phosphate + 2 H(+). Its pathway is pyrimidine metabolism; CTP biosynthesis via de novo pathway; CTP from UDP: step 2/2. Its activity is regulated as follows. Allosterically activated by GTP, when glutamine is the substrate; GTP has no effect on the reaction when ammonia is the substrate. The allosteric effector GTP functions by stabilizing the protein conformation that binds the tetrahedral intermediate(s) formed during glutamine hydrolysis. Inhibited by the product CTP, via allosteric rather than competitive inhibition. Catalyzes the ATP-dependent amination of UTP to CTP with either L-glutamine or ammonia as the source of nitrogen. Regulates intracellular CTP levels through interactions with the four ribonucleotide triphosphates. This chain is CTP synthase, found in Trichormus variabilis (strain ATCC 29413 / PCC 7937) (Anabaena variabilis).